The sequence spans 468 residues: Chromosomal replication initiator protein DnaA (468 aa).

Residues M1–A84 form a domain I, interacts with DnaA modulators region. The interval R81–P104 is disordered. The interval A84–S131 is domain II. The tract at residues N132–A348 is domain III, AAA+ region. ATP contacts are provided by G176, G178, K179, and T180. A domain IV, binds dsDNA region spans residues N349 to S468.

It belongs to the DnaA family. In terms of assembly, oligomerizes as a right-handed, spiral filament on DNA at oriC.

The protein localises to the cytoplasm. In terms of biological role, plays an essential role in the initiation and regulation of chromosomal replication. ATP-DnaA binds to the origin of replication (oriC) to initiate formation of the DNA replication initiation complex once per cell cycle. Binds the DnaA box (a 9 base pair repeat at the origin) and separates the double-stranded (ds)DNA. Forms a right-handed helical filament on oriC DNA; dsDNA binds to the exterior of the filament while single-stranded (ss)DNA is stabiized in the filament's interior. The ATP-DnaA-oriC complex binds and stabilizes one strand of the AT-rich DNA unwinding element (DUE), permitting loading of DNA polymerase. After initiation quickly degrades to an ADP-DnaA complex that is not apt for DNA replication. Binds acidic phospholipids. In Vibrio campbellii (strain ATCC BAA-1116), this protein is Chromosomal replication initiator protein DnaA.